A 379-amino-acid polypeptide reads, in one-letter code: Glucose-1-phosphate adenylyltransferase (379 aa).

Alpha-D-glucose 1-phosphate-binding positions include Tyr-99, Gly-164, 179 to 180, and Ser-190; that span reads EK.

This sequence belongs to the bacterial/plant glucose-1-phosphate adenylyltransferase family. As to quaternary structure, homotetramer.

It catalyses the reaction alpha-D-glucose 1-phosphate + ATP + H(+) = ADP-alpha-D-glucose + diphosphate. It participates in glycan biosynthesis; glycogen biosynthesis. Involved in the biosynthesis of ADP-glucose, a building block required for the elongation reactions to produce glycogen. Catalyzes the reaction between ATP and alpha-D-glucose 1-phosphate (G1P) to produce pyrophosphate and ADP-Glc. The polypeptide is Glucose-1-phosphate adenylyltransferase (Bacillus licheniformis (strain ATCC 14580 / DSM 13 / JCM 2505 / CCUG 7422 / NBRC 12200 / NCIMB 9375 / NCTC 10341 / NRRL NRS-1264 / Gibson 46)).